We begin with the raw amino-acid sequence, 485 residues long: Glutamyl-tRNA(Gln) amidotransferase subunit A (485 aa).

Residues Lys-79 and Ser-154 each act as charge relay system in the active site. Ser-178 (acyl-ester intermediate) is an active-site residue.

The protein belongs to the amidase family. GatA subfamily. As to quaternary structure, heterotrimer of A, B and C subunits.

The enzyme catalyses L-glutamyl-tRNA(Gln) + L-glutamine + ATP + H2O = L-glutaminyl-tRNA(Gln) + L-glutamate + ADP + phosphate + H(+). Allows the formation of correctly charged Gln-tRNA(Gln) through the transamidation of misacylated Glu-tRNA(Gln) in organisms which lack glutaminyl-tRNA synthetase. The reaction takes place in the presence of glutamine and ATP through an activated gamma-phospho-Glu-tRNA(Gln). The protein is Glutamyl-tRNA(Gln) amidotransferase subunit A of Staphylococcus haemolyticus (strain JCSC1435).